The chain runs to 115 residues: Small ribosomal subunit protein bS18c (115 aa).

Positions 91–115 are disordered; that stretch reads TNALKARTQNKDQKKEKFQINKKKK. The segment covering 99 to 109 has biased composition (basic and acidic residues); the sequence is QNKDQKKEKFQ.

It belongs to the bacterial ribosomal protein bS18 family. In terms of assembly, part of the 30S ribosomal subunit.

It localises to the plastid. Its subcellular location is the chloroplast. In Ipomoea purpurea (Common morning glory), this protein is Small ribosomal subunit protein bS18c.